Here is a 144-residue protein sequence, read N- to C-terminus: uncharacterized protein (144 aa).

One can recognise a Rhodanese domain in the interval 50–140 (NQDKAIVVDT…YWKTDNLPLI (91 aa)).

This is an uncharacterized protein from Buchnera aphidicola subsp. Acyrthosiphon pisum (strain APS) (Acyrthosiphon pisum symbiotic bacterium).